The following is a 1164-amino-acid chain: Phytochrome D (1164 aa).

Positions 1 to 55 (MVSGGGSKTSGGEAASSGHRRSRHTSAAEQAQSSANKALRSQNQQPQNHGGGTES) are disordered. Residues 25–55 (TSAAEQAQSSANKALRSQNQQPQNHGGGTES) are compositionally biased toward polar residues. The GAF domain occupies 255–437 (DIKLLCDTVV…AFGLQLNMEL (183 aa)). Cysteine 360 serves as a coordination point for phytochromobilin. PAS domains lie at 656 to 727 (VARE…LKGD) and 790 to 861 (DYKA…MIVL). The region spanning 938–1157 (YIFQVIKNPL…LIVIELPVPL (220 aa)) is the Histidine kinase domain.

Belongs to the phytochrome family. As to quaternary structure, homodimer. Contains one covalently linked phytochromobilin chromophore.

Functionally, regulatory photoreceptor which exists in two forms that are reversibly interconvertible by light: the Pr form that absorbs maximally in the red region of the spectrum and the Pfr form that absorbs maximally in the far-red region. Photoconversion of Pr to Pfr induces an array of morphogenic responses, whereas reconversion of Pfr to Pr cancels the induction of those responses. Pfr controls the expression of a number of nuclear genes including those encoding the small subunit of ribulose-bisphosphate carboxylase, chlorophyll A/B binding protein, protochlorophyllide reductase, rRNA, etc. It also controls the expression of its own gene(s) in a negative feedback fashion. In Arabidopsis thaliana (Mouse-ear cress), this protein is Phytochrome D (PHYD).